We begin with the raw amino-acid sequence, 868 residues long: Leucine--tRNA ligase (868 aa).

Positions Pro42–His52 match the 'HIGH' region motif. A 'KMSKS' region motif is present at residues Lys627 to Ser631. Lys630 contributes to the ATP binding site.

It belongs to the class-I aminoacyl-tRNA synthetase family.

The protein localises to the cytoplasm. It carries out the reaction tRNA(Leu) + L-leucine + ATP = L-leucyl-tRNA(Leu) + AMP + diphosphate. The chain is Leucine--tRNA ligase from Pseudomonas syringae pv. tomato (strain ATCC BAA-871 / DC3000).